Reading from the N-terminus, the 670-residue chain is Auxin response factor 16 (670 aa).

The segment at residues 120 to 222 is a DNA-binding region (TF-B3); sequence FAKTLTQSDA…DLCVGIRRAK (103 aa). The segment covering 545–557 has biased composition (polar residues); that stretch reads KTQISSGGSNQNG. A disordered region spans residues 545-579; it reads KTQISSGGSNQNGVAGREFSSSDEGSPCSKKVHDA. The 81-residue stretch at 584-664 folds into the PB1 domain; it reads TGHCKVFMES…RRLTILTEQG (81 aa).

This sequence belongs to the ARF family. Homodimers and heterodimers.

The protein localises to the nucleus. Auxin response factors (ARFs) are transcriptional factors that bind specifically to the DNA sequence 5'-TGTCTC-3' found in the auxin-responsive promoter elements (AuxREs). Could act as transcriptional activator or repressor. Formation of heterodimers with Aux/IAA proteins may alter their ability to modulate early auxin response genes expression. This is Auxin response factor 16 (ARF16) from Arabidopsis thaliana (Mouse-ear cress).